The following is a 170-amino-acid chain: Envelope protein 166 (170 aa).

M1 is a topological domain (intravirion). The chain crosses the membrane as a helical span at residues 2–22; it reads FYPVVQVLIGIILVIILILGF. Residues 23–170 lie on the Virion surface side of the membrane; it reads YHMKHKPPKK…TVMGIARNVL (148 aa).

This sequence belongs to the asfivirus envelope protein p22 family.

It localises to the virion membrane. The protein localises to the host cell membrane. The protein is Envelope protein 166 of Ornithodoros (relapsing fever ticks).